A 141-amino-acid chain; its full sequence is Oleosin L (141 aa).

The next 3 membrane-spanning stretches (helical) occupy residues 23-43, 46-66, and 74-94; these read VLFFVVMGGGVLASLSALALA, VVLMLILTPVFLLLSPVILPV, and AAAFMAAVTIGIAGAAALIWV. The short motif at 54 to 65 is the Proline-knot element; that stretch reads PVFLLLSPVILP.

This sequence belongs to the oleosin family. In terms of tissue distribution, expressed in megagametophytes (at protein level).

The protein localises to the lipid droplet. It is found in the membrane. This chain is Oleosin L, found in Pinus massoniana (Chinese red pine).